A 252-amino-acid polypeptide reads, in one-letter code: E3 ubiquitin-protein ligase MARCHF3 (252 aa).

The RING-CH-type zinc-finger motif lies at 62 to 122 (SSFNDHPMCR…ELCHFRFSVE (61 aa)). Zn(2+) is bound by residues cysteine 70, cysteine 73, cysteine 86, cysteine 88, histidine 96, cysteine 99, cysteine 112, and cysteine 115. Transmembrane regions (helical) follow at residues 144–164 (LFGD…SGWL) and 181–201 (AVGL…WTLV).

It is found in the cytoplasmic vesicle membrane. Its subcellular location is the early endosome membrane. The catalysed reaction is S-ubiquitinyl-[E2 ubiquitin-conjugating enzyme]-L-cysteine + [acceptor protein]-L-lysine = [E2 ubiquitin-conjugating enzyme]-L-cysteine + N(6)-ubiquitinyl-[acceptor protein]-L-lysine.. It functions in the pathway protein modification; protein ubiquitination. Functionally, E3 ubiquitin-protein ligase which may be involved in endosomal trafficking. E3 ubiquitin ligases accept ubiquitin from an E2 ubiquitin-conjugating enzyme in the form of a thioester and then directly transfer the ubiquitin to targeted substrates. The protein is E3 ubiquitin-protein ligase MARCHF3 (marchf3) of Xenopus laevis (African clawed frog).